A 401-amino-acid chain; its full sequence is Exodeoxyribonuclease 7 large subunit (401 aa).

This sequence belongs to the XseA family. In terms of assembly, heterooligomer composed of large and small subunits.

It localises to the cytoplasm. The enzyme catalyses Exonucleolytic cleavage in either 5'- to 3'- or 3'- to 5'-direction to yield nucleoside 5'-phosphates.. In terms of biological role, bidirectionally degrades single-stranded DNA into large acid-insoluble oligonucleotides, which are then degraded further into small acid-soluble oligonucleotides. The chain is Exodeoxyribonuclease 7 large subunit from Thermoanaerobacter pseudethanolicus (strain ATCC 33223 / 39E) (Clostridium thermohydrosulfuricum).